A 514-amino-acid polypeptide reads, in one-letter code: MVPSQEEPAAAERETNEAQPPGPAPSDDAPLPVPGPSDVSDGSVEKVEVELTRSTGNQEPPEPPEGGWGWLVMLAAMWCNGSVFGIQNAYGVLFVSMLETFGAKDDDNMAFKAAWVGSLSMGMIFFCCPIVSVFTDMFGCRRTAVLGAAVGFVGLMSSSFVSSIEPLYFTYGVVFACGCSFAYQPSLVILGHYFKKRLGLVNGIVTAGSSVFTILLPLLLGNLTSTVGLCYTLRILCIFMFVLFLAGFTYRPLVPSSKEKESEDSRSSFFSRRKLSPPKKIFNFALFKETAYAVWAAGIPLALFGYFVPYVHLMNHVKERFKDVNNKEVLFMCIGVTSGVGRLLFGRIADYLPGVKKVYLQVLSFFFIGLTSMMIPLCSVFGALIALCLIMGLFDGCFISIMAPIAFELVGPQDASQAIGFLLGFMSIPMTVGPPVAGLLHDKLGSYDLAFYLAGIPPFIGGAVLCLIPWIHSKKQREISKNTGGEKMEKMLANQSSLLSSSSGIFKKESDSII.

The disordered stretch occupies residues 1 to 64 (MVPSQEEPAA…TGNQEPPEPP (64 aa)). Over 1–65 (MVPSQEEPAA…GNQEPPEPPE (65 aa)) the chain is Cytoplasmic. Residues 66–86 (GGWGWLVMLAAMWCNGSVFGI) form a helical membrane-spanning segment. Topologically, residues 87–113 (QNAYGVLFVSMLETFGAKDDDNMAFKA) are extracellular. The helical transmembrane segment at 114–134 (AWVGSLSMGMIFFCCPIVSVF) threads the bilayer. Over 135-143 (TDMFGCRRT) the chain is Cytoplasmic. The helical transmembrane segment at 144–164 (AVLGAAVGFVGLMSSSFVSSI) threads the bilayer. At 165 to 170 (EPLYFT) the chain is on the extracellular side. The helical transmembrane segment at 171 to 191 (YGVVFACGCSFAYQPSLVILG) threads the bilayer. Residues 192–199 (HYFKKRLG) lie on the Cytoplasmic side of the membrane. Residues 200–220 (LVNGIVTAGSSVFTILLPLLL) traverse the membrane as a helical segment. Residues 221-227 (GNLTSTV) lie on the Extracellular side of the membrane. The helical transmembrane segment at 228 to 248 (GLCYTLRILCIFMFVLFLAGF) threads the bilayer. Residues 249-290 (TYRPLVPSSKEKESEDSRSSFFSRRKLSPPKKIFNFALFKET) lie on the Cytoplasmic side of the membrane. Position 262 is a phosphoserine (Ser-262). The chain crosses the membrane as a helical span at residues 291–311 (AYAVWAAGIPLALFGYFVPYV). Residues 312–328 (HLMNHVKERFKDVNNKE) lie on the Extracellular side of the membrane. The helical transmembrane segment at 329–349 (VLFMCIGVTSGVGRLLFGRIA) threads the bilayer. Asp-350 is a topological domain (cytoplasmic). Residues 351–371 (YLPGVKKVYLQVLSFFFIGLT) form a helical membrane-spanning segment. Residues 372–395 (SMMIPLCSVFGALIALCLIMGLFD) are Extracellular-facing. The chain crosses the membrane as a helical span at residues 396-416 (GCFISIMAPIAFELVGPQDAS). The Cytoplasmic portion of the chain corresponds to 417 to 418 (QA). The chain crosses the membrane as a helical span at residues 419–439 (IGFLLGFMSIPMTVGPPVAGL). At 440 to 450 (LHDKLGSYDLA) the chain is on the extracellular side. The chain crosses the membrane as a helical span at residues 451–471 (FYLAGIPPFIGGAVLCLIPWI). The Cytoplasmic portion of the chain corresponds to 472–514 (HSKKQREISKNTGGEKMEKMLANQSSLLSSSSGIFKKESDSII). Residues Ser-497, Ser-500, Ser-502, and Ser-503 each carry the phosphoserine modification.

Belongs to the major facilitator superfamily. Monocarboxylate porter (TC 2.A.1.13) family. In terms of processing, not N-glycosylated. As to expression, strongly expressed in intestine, placenta and liver. In small intestine is detected in the basolateral membrane (at protein level).

Its subcellular location is the cell membrane. The protein resides in the basolateral cell membrane. The enzyme catalyses L-tryptophan(in) = L-tryptophan(out). The catalysed reaction is L-tyrosine(in) = L-tyrosine(out). It catalyses the reaction L-phenylalanine(in) = L-phenylalanine(out). It carries out the reaction 3,3',5-triiodo-L-thyronine(out) = 3,3',5-triiodo-L-thyronine(in). The enzyme catalyses L-thyroxine(out) = L-thyroxine(in). Functionally, sodium- and proton-independent thyroid hormones and aromatic acids transporter. Mediates both uptake and efflux of 3,5,3'-triiodothyronine (T3) and 3,5,3',5'-tetraiodothyronine (T4) with high affinity, suggesting a role in the homeostasis of thyroid hormone levels. Responsible for low affinity bidirectional transport of the aromatic amino acids, such as phenylalanine, tyrosine, tryptophan and L-3,4-dihydroxyphenylalanine (L-dopa). Plays an important role in homeostasis of aromatic amino acids. The protein is Monocarboxylate transporter 10 (Slc16a10) of Rattus norvegicus (Rat).